The sequence spans 758 residues: Microtubule-associated protein tau (758 aa).

Basic and acidic residues predominate over residues M1–Q26. The segment at M1–V573 is disordered. The residue at position 2 (A2) is an N-acetylalanine. Phosphotyrosine occurs at positions 18 and 29. K44 is covalently cross-linked (Glycyl lysine isopeptide (Lys-Gly) (interchain with G-Cter in ubiquitin)). S46 and S61 each carry phosphoserine. The span at S61 to T71 shows a compositional bias: polar residues. T69, T71, and T111 each carry phosphothreonine. 2 stretches are compositionally biased toward basic and acidic residues: residues E179–K189 and G207–E216. Residue S214 is modified to Phosphoserine. Residues E217–S228 are compositionally biased toward acidic residues. A compositionally biased stretch (basic and acidic residues) spans E314–R323. Positions A325–P340 are enriched in low complexity. 2 stretches are compositionally biased toward basic and acidic residues: residues E344–E356 and K381–A393. Polar residues predominate over residues K440–S452. Residues K455–T466 show a composition bias toward basic and acidic residues. At T470 the chain carries Phosphothreonine. Omega-N-methylarginine is present on R472. At K480 the chain carries N6,N6-dimethyllysine; alternate. K480 bears the N6-acetyllysine; alternate mark. T486, T492, and T498 each carry phosphothreonine. Over residues K491–G503 the composition is skewed to pro residues. Residues S502, S508, and S512 each carry the phosphoserine modification. The span at E504 to S531 shows a compositional bias: low complexity. At Y514 the chain carries Phosphotyrosine. A phosphoserine mark is found at S515, S516, and S519. Phosphothreonine is present on residues T522 and T529. At S531 the chain carries Phosphoserine. A Phosphothreonine modification is found at T534. K542 carries the N6-acetyllysine modification. The residue at position 548 (T548) is a Phosphothreonine. Phosphoserine is present on residues S552 and S554. Tau/MAP repeat units lie at residues Q561–K591, V592–S622, V623–Q653, and V654–H685. K571 is covalently cross-linked (Glycyl lysine isopeptide (Lys-Gly) (interchain with G-Cter in ubiquitin)). An N6-acetyllysine; alternate modification is found at K576. Residue K576 is modified to N6-methyllysine; alternate. A Glycyl lysine isopeptide (Lys-Gly) (interchain with G-Cter in ubiquitin); alternate cross-link involves residue K576. S579 carries the post-translational modification Phosphoserine. K584 participates in a covalent cross-link: Glycyl lysine isopeptide (Lys-Gly) (interchain with G-Cter in ubiquitin). At K598 the chain carries N6-acetyllysine; alternate. K598 participates in a covalent cross-link: Glycyl lysine isopeptide (Lys-Gly) (interchain with G-Cter in ubiquitin); alternate. 2 positions are modified to phosphoserine: S602 and S606. Position 607 is an N6-acetyllysine (K607). S610 carries the post-translational modification Phosphoserine. K615 bears the N6-acetyllysine; alternate mark. A Glycyl lysine isopeptide (Lys-Gly) (interchain with G-Cter in ubiquitin); alternate cross-link involves residue K615. S622 is subject to Phosphoserine. K628 bears the N6,N6-dimethyllysine; alternate mark. Residues K628, K634, and K638 each carry the N6-acetyllysine; alternate modification. Residues K628, K634, and K638 each participate in a glycyl lysine isopeptide (Lys-Gly) (interchain with G-Cter in ubiquitin); alternate cross-link. Position 641 is a phosphoserine (S641). N6-acetyllysine; alternate occurs at positions 648, 660, and 664. Residues K648, K660, and K664 each participate in a glycyl lysine isopeptide (Lys-Gly) (interchain with G-Cter in ubiquitin); alternate cross-link. R666 is modified (omega-N-methylarginine). Position 669 is a phosphoserine (S669). K670 is covalently cross-linked (Glycyl lysine isopeptide (Lys-Gly) (interchain with G-Cter in ubiquitin)). S673 is modified (phosphoserine). N6-acetyllysine; alternate is present on K686. K686 participates in a covalent cross-link: Glycyl lysine isopeptide (Lys-Gly) (interchain with G-Cter in ubiquitin); alternate. A Glycyl lysine isopeptide (Lys-Gly) (interchain with G-Cter in ubiquitin) cross-link involves residue K692. K702 carries the N6-acetyllysine; alternate modification. K702 participates in a covalent cross-link: Glycyl lysine isopeptide (Lys-Gly) (interchain with G-Cter in ubiquitin); alternate. A Phosphotyrosine modification is found at Y711. S713 and S717 each carry phosphoserine. The segment at V715–I734 is disordered. A compositionally biased stretch (polar residues) spans G718–S733. T720 bears the Phosphothreonine mark. Phosphoserine occurs at positions 721, 726, 733, and 739. T744 carries the phosphothreonine modification.

In terms of assembly, interacts with MARK1, MARK2, MARK3 and MARK4. Interacts with SQSTM1 when polyubiquitinated. Interacts with PSMC2 through SQSTM1. Interacts with FKBP4. Binds to CSNK1D. Interacts with SGK1. Interacts with EPM2A; the interaction dephosphorylates MAPT at Ser-396. Interacts with PIN1. Interacts with LRRK2. Interacts with LRP1, leading to endocytosis; this interaction is reduced in the presence of LRPAP1/RAP. In terms of processing, polyubiquitinated. Requires functional TRAF6 and may provoke SQSTM1-dependent degradation by the proteasome. Phosphorylation at various serine and threonine residues in S-P or T-P motifs by proline-directed protein kinases (PDPK1, CDK1, CDK5, GSK3, MAPK) (a few sites per protein in interphase, more in mitosis), and at serine residues in K-X-G-S motifs by MAP/microtubule affinity-regulating kinase (MARK1, MARK2, MARK3 or MARK4), causing detachment from microtubules, and their disassembly. Phosphorylation at Ser-579 by BRSK1 and BRSK2 in neurons affects ability to bind microtubules and plays a role in neuron polarization. Phosphorylated by PHK. Dephosphorylation at several serine and threonine residues by the serine/threonine phosphatase PPP5C. Phosphorylation at Ser-214 by SGK1 mediates microtubule depolymerization and neurite formation in hippocampal neurons.

The protein resides in the cytoplasm. It localises to the cytosol. The protein localises to the cell membrane. It is found in the cytoskeleton. Its subcellular location is the cell projection. The protein resides in the axon. It localises to the dendrite. Functionally, promotes microtubule assembly and stability, and might be involved in the establishment and maintenance of neuronal polarity. The C-terminus binds axonal microtubules while the N-terminus binds neural plasma membrane components, suggesting that tau functions as a linker protein between both. Axonal polarity is predetermined by tau localization (in the neuronal cell) in the domain of the cell body defined by the centrosome. The short isoforms allow plasticity of the cytoskeleton whereas the longer isoforms may preferentially play a role in its stabilization. The sequence is that of Microtubule-associated protein tau (MAPT) from Pongo pygmaeus (Bornean orangutan).